Here is a 304-residue protein sequence, read N- to C-terminus: MTQETLKSDIKALLKERNAVLLAHNYMRDEVQEIADITGDSLALSIEAAKTDADVIVFCGVHFMAESASILAPEKTVLLPRLDAGCPMADMVSVEALREMKAKLPGVPVVTYVNSSAAVKAESDICCTSANAVKVVQSMSEKEIIFAPDRNLGSYIARFTDKKFHLWEGYCPTHERLRPEVVKELKQANPDAPFVCHPECNPKVVELADHVCSTTGMYDYCKKSGAKRFIIGTEAGILWRLKRESPDKEFILASPALICPNMKLTSLEDVFEALQQMTPVVKVTEEIRIPAKRALDRMLAIPRD.

Iminosuccinate is bound by residues histidine 24 and serine 41. Cysteine 86 is a binding site for [4Fe-4S] cluster. Residues 112–114 (YVN) and serine 129 contribute to the iminosuccinate site. Residue cysteine 171 participates in [4Fe-4S] cluster binding. Iminosuccinate is bound by residues 197 to 199 (HPE) and threonine 214. Position 259 (cysteine 259) interacts with [4Fe-4S] cluster.

Belongs to the quinolinate synthase family. Type 2 subfamily. Requires [4Fe-4S] cluster as cofactor.

Its subcellular location is the cytoplasm. The catalysed reaction is iminosuccinate + dihydroxyacetone phosphate = quinolinate + phosphate + 2 H2O + H(+). It participates in cofactor biosynthesis; NAD(+) biosynthesis; quinolinate from iminoaspartate: step 1/1. Catalyzes the condensation of iminoaspartate with dihydroxyacetone phosphate to form quinolinate. The protein is Quinolinate synthase of Geobacter sp. (strain M21).